The sequence spans 362 residues: Hepatic sodium/bile acid cotransporter (362 aa).

At Met1–Ala22 the chain is on the extracellular side. N-linked (GlcNAc...) asparagine glycosylation is found at Asn5 and Asn11. The helical transmembrane segment at Thr23–Cys44 threads the bilayer. Residues Thr45–Glu47 are Cytoplasmic-facing. A helical transmembrane segment spans residues Phe48–Phe83. The Extracellular segment spans residues His84–Ser86. A discontinuously helical membrane pass occupies residues Asn87–Met112. Over Lys113 to Asp115 the chain is Cytoplasmic. A helical transmembrane segment spans residues Met116–Ser142. The Extracellular segment spans residues Lys143–Tyr156. A helical transmembrane segment spans residues Lys157–Lys179. The Cytoplasmic segment spans residues Arg180–Tyr183. The helical transmembrane segment at Val184 to Val217 threads the bilayer. Residues Met218–Thr219 are Extracellular-facing. Residues Pro220–Leu243 traverse the membrane as a helical segment. Topologically, residues Phe244 to Asn247 are cytoplasmic. A discontinuously helical membrane pass occupies residues Pro248 to Thr273. The Extracellular segment spans residues Phe274 to Gly280. The chain crosses the membrane as a helical span at residues Pro281–Lys311. Topologically, residues Pro312 to Asn362 are cytoplasmic. Thr330 is subject to Phosphothreonine. Positions Ala333–Asn362 are disordered. A compositionally biased stretch (polar residues) spans Asn353–Asn362.

Belongs to the bile acid:sodium symporter (BASS) (TC 2.A.28) family. As to expression, highly expressed in liver and low expression in kidney.

The protein localises to the cell membrane. The enzyme catalyses taurocholate(out) + 2 Na(+)(out) = taurocholate(in) + 2 Na(+)(in). It carries out the reaction taurochenodeoxycholate(out) + 2 Na(+)(out) = taurochenodeoxycholate(in) + 2 Na(+)(in). The catalysed reaction is tauroursodeoxycholate(out) + 2 Na(+)(out) = tauroursodeoxycholate(in) + 2 Na(+)(in). It catalyses the reaction glycocholate(out) + 2 Na(+)(out) = glycocholate(in) + 2 Na(+)(in). The enzyme catalyses estrone 3-sulfate(out) + 2 Na(+)(out) = estrone 3-sulfate(in) + 2 Na(+)(in). It carries out the reaction cholate(out) + 2 Na(+)(out) = cholate(in) + 2 Na(+)(in). The catalysed reaction is tauronorcholate(out) + 2 Na(+)(out) = tauronorcholate(in) + 2 Na(+)(in). It catalyses the reaction taurodeoxycholate(out) + 2 Na(+)(out) = taurodeoxycholate(in) + 2 Na(+)(in). The enzyme catalyses tauroallocholate(out) + 2 Na(+)(out) = tauroallocholate(in) + 2 Na(+)(in). It carries out the reaction taurohyodeoxycholate(out) + 2 Na(+)(out) = taurohyodeoxycholate(in) + 2 Na(+)(in). The catalysed reaction is taurohyocholate(out) + 2 Na(+)(out) = taurohyocholate(in) + 2 Na(+)(in). It catalyses the reaction tauro-beta-muricholate(out) + 2 Na(+)(out) = tauro-beta-muricholate(in) + 2 Na(+)(in). The transport of bile acids is sodium-dependent. In terms of biological role, as a major transporter of conjugated bile salts from plasma into the hepatocyte, it plays a key role in the enterohepatic circulation of bile salts necessary for the solubilization and absorption of dietary fat and fat-soluble vitamins. It is strictly dependent on the extracellular presence of sodium. It exhibits broad substrate specificity and transports various bile acids, such as taurocholate, cholate, as well as non-bile acid organic compounds, such as estrone sulfate. Works collaboratively with the ileal transporter (NTCP2), the organic solute transporter (OST), and the bile salt export pump (BSEP), to ensure efficacious biological recycling of bile acids during enterohepatic circulation. This is Hepatic sodium/bile acid cotransporter (Slc10a1) from Rattus norvegicus (Rat).